A 147-amino-acid chain; its full sequence is Acidic phospholipase A2 1 (147 aa).

The first 19 residues, 1–19 (MNPAHLLVLAAVCVSLLGA), serve as a signal peptide directing secretion. The propeptide occupies 20–27 (AIVPPQPL). Disulfide bonds link Cys-38/Cys-99, Cys-54/Cys-146, Cys-56/Cys-72, Cys-71/Cys-127, Cys-78/Cys-120, Cys-88/Cys-113, and Cys-106/Cys-118. 3 residues coordinate Ca(2+): Tyr-55, Gly-57, and Gly-59. His-75 is a catalytic residue. Asp-76 lines the Ca(2+) pocket. The active site involves Asp-121.

This sequence belongs to the phospholipase A2 family. Group I subfamily. D49 sub-subfamily. Ca(2+) is required as a cofactor. Expressed by the venom gland.

It localises to the secreted. The enzyme catalyses a 1,2-diacyl-sn-glycero-3-phosphocholine + H2O = a 1-acyl-sn-glycero-3-phosphocholine + a fatty acid + H(+). Functionally, PLA2 catalyzes the calcium-dependent hydrolysis of the 2-acyl groups in 3-sn-phosphoglycerides. The chain is Acidic phospholipase A2 1 from Bungarus flaviceps flaviceps (Red-headed krait).